We begin with the raw amino-acid sequence, 100 residues long: Large ribosomal subunit protein eL21 (100 aa).

This sequence belongs to the eukaryotic ribosomal protein eL21 family.

This is Large ribosomal subunit protein eL21 from Pyrobaculum aerophilum (strain ATCC 51768 / DSM 7523 / JCM 9630 / CIP 104966 / NBRC 100827 / IM2).